We begin with the raw amino-acid sequence, 1421 residues long: MRKRRLWWFVVLFRVTLVGAILPNETFDVRRYYADRFLIEDEENGSSRSYYISAESKAKAAEQFALLAPNCSLTSDIQENTCNETSSFCDHRVDSTYKTYHYEQEKCNCFIETCDEETNSTELMVLYPDCYCGKREKHCDLSKEKCHWTPDSDHDDLKFEVFESSNKVLFDYMLQAGSEKANLKMNKVSMVSKFFRQSGFNCSLRFMHHFTHQSSTSRLVVRSILQSGEKKNLYEHWLKPASVFWVPVQVAIGSYAEPFKISIDCETGFPPKKKKNKPFTCSIADIYFENCGEIRDPIEQCSRGDQFLCSISANTRCLQNAQCDSRIDCDDESDEMDCGNINGTMCDFNGQDYCNSWYQVTNVTDYHERLSEPTTVAPLNKLNEVPLHLFRLQSPSAKIKEAMRGSGNMLVFDHKPNPLTRRTSALVSPELPRTNPEAYDEKSPLFKSCKLRFYLCSRTYSKVWQISVISKGINPMESGRTIIYEAGYTLIPKENCTWERVFVNIPRQNAGFRIGIFVTNYFPGSEEYVAIDNLSFSPTCFERDINQSTWDIPDLFINTCGASGFEQPQNCDHNRELDGQTGHFLKEDGTQQWTVPVTGFYRMEICGAGGGSNSKASGDTGDCVTLQVHLIENLSLRMLIGQMGESPCFTEHDDELRPSSCSKISHNYVYDGKRGAAGGGATLLTVEKDLWNVVAGGGAGASWDGFDMEVGYGASAIHVKPDQRCNETCKAVSHTDFIVERRDNRCPGEKGESTVFGGFGGGGNSCGMLGGSGAGYQAGNPFGKSRARSGSSNVSIDFSKSPIYYQSERLDEGYIKIAFCRKRCEPPTVCRFRKDYFEEEYCGCPDGSNVTDTEEACAFPLVCPSSSTNQYRNFTYEPFCLCNNGKEIYDVYNDTCEEIQIWTLYNITFLIFAALTIIGALFVVYHYRNREKQMKQEILDLTQMKSPDYLYDDIYFGRTTRKAALDSLPSISRDSIERGRVLGRGNFGEVYYGEYSGVKLAVKMISRTFSASQASQSDFCNEALCMGTFVDENVVRLIGIDFEKVPYMIALEYMEGGDLLSFVKECRPNQVSLNPFQLAMSDLIKICCDVAAGCKCLETFGYVHRDIAARNILLTTRGPQRVAKIADFGMAKEITYGTEYYRINGRTMMPIKWTPPEAFIDGVFTTKSDIWSFGVLCWEVFSLGVVPYPNRRNEEVMLMLTEGARLEYPYGIPTRVYQLMRDCWKTAAADRPKFVDVVEIFQDIQDDPASVGMPFPIHPAVRATFAHSQSTPVSVETPMTAMTEISLNSTFTDASTVKVSAQQDMQDRIQLHELMLTREHPYTSELTSYVVNSIRKDLARVQYENGLTSVPQPEYLSPENNDESVQLIPQSNTVTDQTPPTSLIDLNRLGVQNTGPTLHRPDSLNFNDPYSSVPLLECQTR.

A signal peptide spans 1-20 (MRKRRLWWFVVLFRVTLVGA). The Extracellular portion of the chain corresponds to 21 to 903 (ILPNETFDVR…DTCEEIQIWT (883 aa)). Asn24, Asn44, Asn70, Asn83, Asn119, and Asn201 each carry an N-linked (GlcNAc...) asparagine glycan. One can recognise an LDL-receptor class A domain in the interval 300 to 338 (QCSRGDQFLCSISANTRCLQNAQCDSRIDCDDESDEMDC). Cystine bridges form between Cys301-Cys317, Cys309-Cys329, and Cys323-Cys338. Residues 339-542 (GNINGTMCDF…NLSFSPTCFE (204 aa)) form the MAM domain. Asn342, Asn362, Asn495, Asn533, Asn546, Asn633, Asn726, Asn793, Asn849, Asn873, and Asn893 each carry an N-linked (GlcNAc...) asparagine glycan. The helical transmembrane segment at 904–924 (LYNITFLIFAALTIIGALFVV) threads the bilayer. The Cytoplasmic portion of the chain corresponds to 925–1421 (YHYRNREKQM…SVPLLECQTR (497 aa)). One can recognise a Protein kinase domain in the interval 976–1261 (IERGRVLGRG…GMPFPIHPAV (286 aa)). ATP is bound by residues 982 to 990 (LGRGNFGEV) and Lys1003. Asp1106 (proton acceptor) is an active-site residue.

This sequence belongs to the protein kinase superfamily. Tyr protein kinase family. Insulin receptor subfamily. As to quaternary structure, interacts (via cytoplasmic domain) with fsn-1 (via SPRY domain). In terms of tissue distribution, expressed in AIA sensory neurons.

The protein resides in the cell membrane. The catalysed reaction is L-tyrosyl-[protein] + ATP = O-phospho-L-tyrosyl-[protein] + ADP + H(+). Its function is as follows. Probable tyrosine-protein kinase receptor which regulates the dauer/non-dauer developmental decision probably by controlling daf-3 transcriptional activity in parallel or together with the TGF-beta pathway. Regulates integration of conflicting sensory cues in AIA interneurons. May act as a receptor for hen-1. In AWA neurons, together with hen-1, plays a role in regulating olfactory adaptation by controlling the forgetting sensory responses to odorants such as diacetyl. The protein is ALK tyrosine kinase receptor homolog scd-2 of Caenorhabditis elegans.